Consider the following 134-residue polypeptide: Small ribosomal subunit protein uS8c (134 aa).

The protein belongs to the universal ribosomal protein uS8 family. In terms of assembly, part of the 30S ribosomal subunit.

The protein localises to the plastid. In terms of biological role, one of the primary rRNA binding proteins, it binds directly to 16S rRNA central domain where it helps coordinate assembly of the platform of the 30S subunit. This chain is Small ribosomal subunit protein uS8c (rps8), found in Cuscuta reflexa (Southern Asian dodder).